Here is a 72-residue protein sequence, read N- to C-terminus: MMRFTIGVVCLVAVLLSLAEVSEANYKNAPMNGIMFGKRGPTEYDQRGKTFTALCEIATEACQAWFPSTENK.

The first 24 residues, 1–24, serve as a signal peptide directing secretion; that stretch reads MMRFTIGVVCLVAVLLSLAEVSEA. F36 carries the post-translational modification Phenylalanine amide. The propeptide occupies 40–72; that stretch reads GPTEYDQRGKTFTALCEIATEACQAWFPSTENK.

Expressed in corpora cardiaca (CC), corpora allata (CA), antennal lobe (AL) and gnathal ganglion (GNG) (at protein level). Expression detected in only a few animals (at protein level).

It is found in the secreted. The chain is Neuropeptide IMFamide from Agrotis ipsilon (Black cutworm moth).